Reading from the N-terminus, the 204-residue chain is Proteasome subunit beta 1 (204 aa).

A propeptide spans 1–9 (MSYEYGTGA) (removed in mature form; by autocatalysis). The active-site Nucleophile is threonine 10.

Belongs to the peptidase T1B family. As to quaternary structure, the 20S proteasome core is composed of 14 alpha and 14 beta subunits that assemble into four stacked heptameric rings, resulting in a barrel-shaped structure. The two inner rings, each composed of seven catalytic beta subunits, are sandwiched by two outer rings, each composed of seven alpha subunits. The catalytic chamber with the active sites is on the inside of the barrel. Has a gated structure, the ends of the cylinder being occluded by the N-termini of the alpha-subunits. Is capped at one or both ends by the proteasome regulatory ATPase, PAN.

It is found in the cytoplasm. The catalysed reaction is Cleavage of peptide bonds with very broad specificity.. Its activity is regulated as follows. The formation of the proteasomal ATPase PAN-20S proteasome complex, via the docking of the C-termini of PAN into the intersubunit pockets in the alpha-rings, triggers opening of the gate for substrate entry. Interconversion between the open-gate and close-gate conformations leads to a dynamic regulation of the 20S proteasome proteolysis activity. Functionally, component of the proteasome core, a large protease complex with broad specificity involved in protein degradation. This Hyperthermus butylicus (strain DSM 5456 / JCM 9403 / PLM1-5) protein is Proteasome subunit beta 1.